The following is a 146-amino-acid chain: Wheatwin-1 (146 aa).

An N-terminal signal peptide occupies residues 1–21; that stretch reads MAARPMLVVALLCAAAAAATA. Pyrrolidone carboxylic acid is present on Gln-22. Positions 22-146 constitute a Barwin domain; sequence QQATNVRATY…VNYQFVDCRD (125 aa). Intrachain disulfides connect Cys-52-Cys-84, Cys-73-Cys-107, and Cys-87-Cys-144.

As to quaternary structure, monomer.

Its activity is regulated as follows. Inhibited by 5'-ADP. Functionally, shows antifungal activity towards B.cinerea and towards the wheat-specific pathogenic fungi F.culmorum and F.graminearum (groups 1 and 2). Has ribonuclease activity. The protein is Wheatwin-1 (PR4A) of Triticum aestivum (Wheat).